The chain runs to 591 residues: Protein NRT1/ PTR FAMILY 1.1 (591 aa).

The next 11 membrane-spanning stretches (helical) occupy residues 68–88 (TVLF…AFLS), 98–118 (IVIA…TAML), 139–159 (SSQL…SGGI), 186–206 (FFGW…TVIV), 216–236 (IGFG…VFAS), 329–349 (LKAL…SINV), 374–394 (IPAG…VVLY), 418–438 (MGLG…VEHY), 460–480 (AMWL…TGIG), 496–516 (IAAS…SVIL), and 543–563 (YYWV…VCSW).

Belongs to the major facilitator superfamily. Proton-dependent oligopeptide transporter (POT/PTR) (TC 2.A.17) family. As to expression, expressed in siliques, shoots and roots. Mainly detected in larger expanded leaves, in the companion cells of major veins.

Its subcellular location is the cell membrane. In terms of biological role, low-affinity nitrate transporter involved in xylem-to-phloem transfer for redistributing nitrate into developing leaves. Not involved in dipeptides transport. The sequence is that of Protein NRT1/ PTR FAMILY 1.1 (NPF1.1) from Arabidopsis thaliana (Mouse-ear cress).